A 288-amino-acid chain; its full sequence is Ankyrin repeat and SOCS box protein 8 (288 aa).

Residue Ser17 is modified to Phosphoserine. ANK repeat units follow at residues 52-81 (GTLKPLHCACMVSDADCVELLLEKGAEVNA), 85-113 (YNRTALHYAAEKDEACVEVLLEYGANPNA), 117-146 (NRDTPLHWAAFKNNAECVRALLESGASVNA), and 150-179 (NNDTPLSWAAMKGNLESVSILLDYGAEVRV). The SOCS box domain maps to 235–288 (QLCEKLTVLCSAPGTLKTLARYTVRRSLGLQYLPDAVKGLPLPASLKEYLLLLE).

It belongs to the ankyrin SOCS box (ASB) family. Interacts with TBK1; this interaction promotes TBK1 proteasomal degradation. Post-translationally, phosphorylated by TBK1.

It localises to the cytoplasm. It functions in the pathway protein modification; protein ubiquitination. Functionally, may be a substrate-recognition component of a SCF-like ECS (Elongin-Cullin-SOCS-box protein) E3 ubiquitin-protein ligase complex which mediates the ubiquitination and subsequent proteasomal degradation of target proteins. Inhibits IFN-beta production through the IRF3 signaling pathway by targeting TBK1 via 'Lys-48'-linked ubiquitination, leading to its proteasomal degradation. In Pongo abelii (Sumatran orangutan), this protein is Ankyrin repeat and SOCS box protein 8 (ASB8).